The following is a 1063-amino-acid chain: Valine--tRNA ligase, mitochondrial (1063 aa).

The transit peptide at 1–26 (MPHLPLASFRPPFWGLRHSRGLPRFH) directs the protein to the mitochondrion. Positions 25–53 (FHSVSTQSEPHGSPISRRNREAKQKRLRE) are disordered. Basic and acidic residues predominate over residues 42-53 (RNREAKQKRLRE). A 'HIGH' region motif is present at residues 146-156 (PNVTGSLHIGH). The 'KMSKS' region signature appears at 658-662 (KMSKS). Residue Lys661 coordinates ATP.

The protein belongs to the class-I aminoacyl-tRNA synthetase family.

Its subcellular location is the mitochondrion. The catalysed reaction is tRNA(Val) + L-valine + ATP = L-valyl-tRNA(Val) + AMP + diphosphate. Its function is as follows. Catalyzes the attachment of valine to tRNA(Val) in a two-step reaction: valine is first activated by ATP to form Val-AMP and then transferred to the acceptor end of tRNA(Val). This Homo sapiens (Human) protein is Valine--tRNA ligase, mitochondrial (VARS2).